The sequence spans 509 residues: Maturase K (509 aa).

It belongs to the intron maturase 2 family. MatK subfamily.

The protein localises to the plastid. It is found in the chloroplast. Usually encoded in the trnK tRNA gene intron. Probably assists in splicing its own and other chloroplast group II introns. This Vatairea macrocarpa protein is Maturase K.